A 76-amino-acid polypeptide reads, in one-letter code: Acyl carrier protein (76 aa).

The region spanning 2-76 (SDIAERVKKI…QAIDYIQSHT (75 aa)) is the Carrier domain. Ser36 carries the post-translational modification O-(pantetheine 4'-phosphoryl)serine.

This sequence belongs to the acyl carrier protein (ACP) family. Post-translationally, 4'-phosphopantetheine is transferred from CoA to a specific serine of apo-ACP by AcpS. This modification is essential for activity because fatty acids are bound in thioester linkage to the sulfhydryl of the prosthetic group.

It localises to the cytoplasm. It participates in lipid metabolism; fatty acid biosynthesis. Carrier of the growing fatty acid chain in fatty acid biosynthesis. The chain is Acyl carrier protein from Methylococcus capsulatus (strain ATCC 33009 / NCIMB 11132 / Bath).